The primary structure comprises 313 residues: RHOMBOID-like protein 7 (313 aa).

The segment covering 1–11 (MLSTAAEEDPE) has biased composition (acidic residues). Positions 1 to 24 (MLSTAAEEDPEGGSRETNNGGETT) are disordered. Residues 15–24 (RETNNGGETT) are compositionally biased toward polar residues. 7 helical membrane-spanning segments follow: residues 31–51 (SWII…VMYY), 112–132 (WLHA…YIGV), 143–163 (VGTI…LFLE), 166–186 (ISVG…SELL), 196–216 (GVAI…GTLP), 221–241 (FAHI…LIHP), and 269–289 (LCIV…VILF). The Nucleophile role is filled by S171. The active-site Charge relay system is the H223.

Belongs to the peptidase S54 family.

Its subcellular location is the membrane. It carries out the reaction Cleaves type-1 transmembrane domains using a catalytic dyad composed of serine and histidine that are contributed by different transmembrane domains.. Probable rhomboid-type serine protease that catalyzes intramembrane proteolysis. May function in embryo development. In Arabidopsis thaliana (Mouse-ear cress), this protein is RHOMBOID-like protein 7.